The primary structure comprises 298 residues: DDRGK domain-containing protein 1 (298 aa).

The Lumenal portion of the chain corresponds to 1 to 2 (ME). A helical transmembrane segment spans residues 3–23 (EIFALIVSMILIVAVIPLFFW). Over 24-298 (KRRRDARSRE…ISGMEEISVS (275 aa)) the chain is Cytoplasmic. The interval 31–155 (SREEVAEPPQ…EEEKARQAKE (125 aa)) is disordered. Basic and acidic residues predominate over residues 101 to 155 (KRQEREAQRQAEEATRESRNTKQDWYAEMRRKKDEEREAEELKLEEEEKARQAKE).

It belongs to the DDRGK1 family.

Its subcellular location is the endoplasmic reticulum membrane. In terms of biological role, substrate adapter for ufmylation, the covalent attachment of the ubiquitin-like modifier UFM1 to substrate proteins. This Arabidopsis thaliana (Mouse-ear cress) protein is DDRGK domain-containing protein 1.